The following is a 531-amino-acid chain: High-affinity glucose transporter ght2 (531 aa).

The Cytoplasmic segment spans residues 5-13; the sequence is RGKNFTLVM. The chain crosses the membrane as a helical span at residues 14–34; the sequence is LIFVSMAGWMFGADTGSIGGV. At 35–62 the chain is on the extracellular side; sequence TSMRDFRERYADRYDPITDQYSLSSARQ. A helical membrane pass occupies residues 63 to 83; that stretch reads GLLTGMVNVGSLFGCIISSPI. Residues 84-91 are Cytoplasmic-facing; sequence ADRFGKRL. The helical transmembrane segment at 92–112 threads the bilayer; that stretch reads SIIGFCAVYIIGIIVQVTAVP. At 113-116 the chain is on the extracellular side; that stretch reads SWVQ. The chain crosses the membrane as a helical span at residues 117–137; sequence IMVAKIWTGIGIGALSVLAPG. Over 138 to 148 the chain is Cytoplasmic; sequence YQSETAPPSIR. A helical transmembrane segment spans residues 149-169; it reads GTVVVTYQLFVTGGIFIAACI. Residues 170–183 lie on the Extracellular side of the membrane; that stretch reads NMGTHKLHKTAQWR. The helical transmembrane segment at 184–204 threads the bilayer; it reads VSIGINLLWGIITMIGILFLP. The Cytoplasmic portion of the chain corresponds to 205-270; it reads ESPRYLIQVG…IFGKDIRYRT (66 aa). A helical membrane pass occupies residues 271–289; the sequence is FLGMFVMSLQQLTGNNYFF. Residues 290–305 are Extracellular-facing; that stretch reads YYGFSVMQGAGINSPY. A helical transmembrane segment spans residues 306–326; sequence LSAMILDAVNFGCTFGGMYVL. The Cytoplasmic portion of the chain corresponds to 327-332; the sequence is ERFGRR. The chain crosses the membrane as a helical span at residues 333-353; sequence NPLIIGGIWQSICFFIYSAVG. Residues 354 to 367 lie on the Extracellular side of the membrane; the sequence is SRALYHKNGTSNTR. N-linked (GlcNAc...) asparagine glycosylation occurs at Asn-361. The chain crosses the membrane as a helical span at residues 368–388; it reads AGAVMIVMACLFIFGFAQTWA. Residues 389-408 are Cytoplasmic-facing; the sequence is PAAYVIVGESYPVRYRSKCA. The chain crosses the membrane as a helical span at residues 409–429; it reads AVATASNWLWNFLISFFTPFI. Over 430 to 436 the chain is Extracellular; the sequence is QASIGFK. Residues 437-457 traverse the membrane as a helical segment; sequence YGYVFASCNLTGAIVIFLFAK. The Cytoplasmic segment spans residues 458 to 531; that stretch reads ETKGLTLEEI…QYSSHEEDYA (74 aa). Positions 491-531 are disordered; the sequence is KKVEKEKSRKGGARGESVEYVERASNTDSSPQYSSHEEDYA. Ser-507, Ser-515, Ser-519, and Ser-520 each carry phosphoserine. Polar residues predominate over residues 514 to 524; it reads ASNTDSSPQYS. Tyr-523 carries the phosphotyrosine modification.

The protein belongs to the major facilitator superfamily. Sugar transporter (TC 2.A.1.1) family.

It localises to the membrane. In terms of biological role, high-affinity glucose transporter. The chain is High-affinity glucose transporter ght2 (ght2) from Schizosaccharomyces pombe (strain 972 / ATCC 24843) (Fission yeast).